The sequence spans 313 residues: Porphobilinogen deaminase (313 aa).

S-(dipyrrolylmethanemethyl)cysteine is present on cysteine 242.

This sequence belongs to the HMBS family. Monomer. It depends on dipyrromethane as a cofactor.

The enzyme catalyses 4 porphobilinogen + H2O = hydroxymethylbilane + 4 NH4(+). It participates in porphyrin-containing compound metabolism; protoporphyrin-IX biosynthesis; coproporphyrinogen-III from 5-aminolevulinate: step 2/4. Tetrapolymerization of the monopyrrole PBG into the hydroxymethylbilane pre-uroporphyrinogen in several discrete steps. This chain is Porphobilinogen deaminase, found in Pseudomonas fluorescens (strain ATCC BAA-477 / NRRL B-23932 / Pf-5).